The chain runs to 401 residues: Phosphoglycerate kinase (401 aa).

Substrate-binding positions include 29–31 (DFN), Arg-45, 69–72 (HLGR), Arg-125, and Arg-158. Residues Lys-209, Glu-331, and 357–360 (GGDT) contribute to the ATP site.

This sequence belongs to the phosphoglycerate kinase family. As to quaternary structure, monomer.

The protein localises to the cytoplasm. The enzyme catalyses (2R)-3-phosphoglycerate + ATP = (2R)-3-phospho-glyceroyl phosphate + ADP. It participates in carbohydrate degradation; glycolysis; pyruvate from D-glyceraldehyde 3-phosphate: step 2/5. The chain is Phosphoglycerate kinase from Wolinella succinogenes (strain ATCC 29543 / DSM 1740 / CCUG 13145 / JCM 31913 / LMG 7466 / NCTC 11488 / FDC 602W) (Vibrio succinogenes).